Reading from the N-terminus, the 122-residue chain is Small ribosomal subunit protein uS13 (122 aa).

Residues 99–122 (RGQRTHTNARTRKGPAKAIAGKKK) form a disordered region.

The protein belongs to the universal ribosomal protein uS13 family. In terms of assembly, part of the 30S ribosomal subunit. Forms a loose heterodimer with protein S19. Forms two bridges to the 50S subunit in the 70S ribosome.

Its function is as follows. Located at the top of the head of the 30S subunit, it contacts several helices of the 16S rRNA. In the 70S ribosome it contacts the 23S rRNA (bridge B1a) and protein L5 of the 50S subunit (bridge B1b), connecting the 2 subunits; these bridges are implicated in subunit movement. Contacts the tRNAs in the A and P-sites. The polypeptide is Small ribosomal subunit protein uS13 (Sinorhizobium fredii (strain NBRC 101917 / NGR234)).